Reading from the N-terminus, the 488-residue chain is Probable malate:quinone oxidoreductase (488 aa).

Belongs to the MQO family. FAD is required as a cofactor.

The enzyme catalyses (S)-malate + a quinone = a quinol + oxaloacetate. The protein operates within carbohydrate metabolism; tricarboxylic acid cycle; oxaloacetate from (S)-malate (quinone route): step 1/1. The polypeptide is Probable malate:quinone oxidoreductase (Neisseria meningitidis serogroup C / serotype 2a (strain ATCC 700532 / DSM 15464 / FAM18)).